A 303-amino-acid chain; its full sequence is Aquaporin-7 (303 aa).

The Cytoplasmic segment spans residues 1-21; the sequence is MAPRSVLETIQSVLQKNMVRE. The residue at position 5 (serine 5) is a Phosphoserine. The chain crosses the membrane as a helical span at residues 22–39; the sequence is FLAEFLSTYVMMVFGLGS. Residues 40-52 are Extracellular-facing; that stretch reads VAHMVLGENSGSY. The chain crosses the membrane as a helical span at residues 53 to 70; the sequence is LGVNLGFGFGVTMGVHVA. At 71 to 74 the chain is on the cytoplasmic side; sequence GGIS. An intramembrane region (discontinuously helical) is located at residues 75-88; sequence GAHMNAAVTFTNCA. The NPA 1 signature appears at 79-81; sequence NAA. Over 89-96 the chain is Cytoplasmic; that stretch reads LGRMTWKK. Residues 97–117 traverse the membrane as a helical segment; it reads FPVYVLGQFLGSFSAAATTYL. The Extracellular portion of the chain corresponds to 118 to 152; it reads IFYGAINHFAGGDLLVTGSKATANIFATYLPEYMT. Residues 153 to 173 traverse the membrane as a helical segment; that stretch reads LWRGFLDEAFVTGMLQLCLFA. Residues 174–185 are Cytoplasmic-facing; the sequence is ITDKKNSPALQG. Residues 186–202 form a helical membrane-spanning segment; that stretch reads TEPLVIGILVTVLGVSL. The Extracellular segment spans residues 203–206; it reads GMNS. The segment at residues 207–220 is an intramembrane region (discontinuously helical); that stretch reads GYAINPSRDLPPRL. The NPA 2 motif lies at 211–213; it reads NPS. Topologically, residues 221–238 are extracellular; sequence FTFIAGWGKQVFRAGNNW. A helical transmembrane segment spans residues 239–260; that stretch reads WWVPVVAPLLGAYLGGIVYLGL. The Cytoplasmic segment spans residues 261 to 303; it reads IHPSIPQDPQRLENFTARDQKVTASYKNAASANISGSVPLEHF.

Belongs to the MIP/aquaporin (TC 1.A.8) family. As to quaternary structure, homotetramer; each monomer provides an independent glycerol/water pore. Two homotetramers on opposing membranes can dimerize, forming a cell-cell junction. Interacts with PLIN1. Phosphorylation by PKA could prevent the interaction with PLIN1. Detected in proximal tubules in kidney. Detected in the capillary network between muscle fibers in skeletal muscle and heart, and in spermatids and on spermatozoa tails in testis and epididymis. Detected in white and brown adipose tissue, especially on small blood vessels (at protein level). Detected in kidney and white adipose tissue.

It is found in the cell membrane. Its subcellular location is the cytoplasmic vesicle membrane. The protein localises to the lipid droplet. The catalysed reaction is glycerol(in) = glycerol(out). It carries out the reaction H2O(in) = H2O(out). The enzyme catalyses urea(in) = urea(out). Its activity is regulated as follows. Glycerol transport is regulated by pH, with the porin being permeable to glycerol at pH 7.4 but not at pH 5.5. Water permeability, however, is not influenced by pH. In terms of biological role, aquaglyceroporins form homotetrameric transmembrane channels, with each monomer independently mediating glycerol and water transport across the plasma membrane along their osmotic gradient. Could also be permeable to urea. Mediates the efflux of glycerol, formed upon triglyceride hydrolysis, to avoid its accumulation in adipocytes and to make it available to other tissues. In the kidney, mediates the reabsorption of glycerol, preventing its loss in urine, again participating to energy homeostasis. In pancreatic beta cells, it also mediates the efflux of glycerol, regulating its intracellular levels. The polypeptide is Aquaporin-7 (Mus musculus (Mouse)).